We begin with the raw amino-acid sequence, 191 residues long: Amelogenin, X isoform (191 aa).

The signal sequence occupies residues 1–16 (MGTWILFACLLGAAFA). Serine 32 is modified (phosphoserine). The span at 95 to 117 (IPQQPMMPVPGQHSMTPIQHHQP) shows a compositional bias: low complexity. Positions 95 to 191 (IPQQPMMPVP…TDKTKREEVD (97 aa)) are disordered. Residues 118-171 (NLPPPAQQPYQPQPVQPQPHQPMQPQPPVHPMQPLPPQPPLPPMFPMQPLPPML) are compositionally biased toward pro residues.

It belongs to the amelogenin family. Interacts with KRT5. In terms of processing, phosphorylated by FAM20C in vitro.

The protein localises to the secreted. Its subcellular location is the extracellular space. It localises to the extracellular matrix. Functionally, plays a role in biomineralization. Seems to regulate the formation of crystallites during the secretory stage of tooth enamel development. Thought to play a major role in the structural organization and mineralization of developing enamel. This chain is Amelogenin, X isoform (AMELX), found in Homo sapiens (Human).